Consider the following 734-residue polypeptide: Photosystem I P700 chlorophyll a apoprotein A2 (734 aa).

The next 8 helical transmembrane spans lie at 46–69 (IFASHFGQLAIIFLWTSGNLFHVA), 135–158 (LYTGALFLLVGAAILLFAGWLHLQ), 175–199 (LNHHLAGLFGVSSLAWTGHLVHVAI), 273–291 (MAHHHLAIAVVFILAGHMY), 330–353 (LHFQLGLALASLGVITSLVAQHMY), 369–395 (SALYTHHQYIAGFIMTGAFAHGAIFFI), 417–439 (ALISHLSWVTLFLGFHTLGLYVH), and 517–535 (FLVHHAIALGLHTTTLILV). Positions 559 and 568 each coordinate [4Fe-4S] cluster. The next 2 membrane-spanning stretches (helical) occupy residues 575 to 596 (AFYLAVFWMLNTIGWTTFYWHW) and 643 to 665 (LSVWAWMFLFGHLVWATGFMFLI). Histidine 654, methionine 662, and tyrosine 670 together coordinate chlorophyll a. Tryptophan 671 is a phylloquinone binding site. The helical transmembrane segment at 707–727 (LVGLAHFSVGYVFTYAAFVIA) threads the bilayer.

This sequence belongs to the PsaA/PsaB family. As to quaternary structure, the PsaA/B heterodimer binds the P700 chlorophyll special pair and subsequent electron acceptors. PSI consists of a core antenna complex that captures photons, and an electron transfer chain that converts photonic excitation into a charge separation. The eukaryotic PSI reaction center is composed of at least 11 subunits. It depends on P700 is a chlorophyll a/chlorophyll a' dimer, A0 is one or more chlorophyll a, A1 is one or both phylloquinones and FX is a shared 4Fe-4S iron-sulfur center. as a cofactor.

The protein localises to the plastid. The protein resides in the chloroplast thylakoid membrane. The enzyme catalyses reduced [plastocyanin] + hnu + oxidized [2Fe-2S]-[ferredoxin] = oxidized [plastocyanin] + reduced [2Fe-2S]-[ferredoxin]. In terms of biological role, psaA and PsaB bind P700, the primary electron donor of photosystem I (PSI), as well as the electron acceptors A0, A1 and FX. PSI is a plastocyanin/cytochrome c6-ferredoxin oxidoreductase, converting photonic excitation into a charge separation, which transfers an electron from the donor P700 chlorophyll pair to the spectroscopically characterized acceptors A0, A1, FX, FA and FB in turn. Oxidized P700 is reduced on the lumenal side of the thylakoid membrane by plastocyanin or cytochrome c6. The chain is Photosystem I P700 chlorophyll a apoprotein A2 from Nephroselmis olivacea (Green alga).